A 146-amino-acid chain; its full sequence is Hemoglobin subunit beta (146 aa).

In terms of domain architecture, Globin spans 2–146; sequence HWTETERATI…VVAALSREYH (145 aa). Residues His63 and His92 each coordinate heme b.

Belongs to the globin family. In terms of assembly, heterotetramer of two alpha chains and two beta chains (an easy dimerization is also reported). Red blood cells.

Involved in oxygen transport from the lung to the various peripheral tissues. The polypeptide is Hemoglobin subunit beta (HBB) (Latimeria chalumnae (Coelacanth)).